Here is a 202-residue protein sequence, read N- to C-terminus: 3-isopropylmalate dehydratase small subunit (202 aa).

Belongs to the LeuD family. LeuD type 1 subfamily. As to quaternary structure, heterodimer of LeuC and LeuD.

The catalysed reaction is (2R,3S)-3-isopropylmalate = (2S)-2-isopropylmalate. The protein operates within amino-acid biosynthesis; L-leucine biosynthesis; L-leucine from 3-methyl-2-oxobutanoate: step 2/4. Functionally, catalyzes the isomerization between 2-isopropylmalate and 3-isopropylmalate, via the formation of 2-isopropylmaleate. This chain is 3-isopropylmalate dehydratase small subunit, found in Blochmanniella pennsylvanica (strain BPEN).